We begin with the raw amino-acid sequence, 471 residues long: Proline and serine-rich protein 2 (471 aa).

Disordered regions lie at residues 1–46 (MPGN…SFTM) and 82–247 (CDSG…GDHV). A compositionally biased stretch (low complexity) spans 26 to 43 (LSRGGSLESRCSSSRSRS). Serine 43 carries the post-translational modification Phosphoserine. Threonine 45 carries the phosphothreonine modification. The segment covering 90-101 (SPQSLEESPSSH) has biased composition (low complexity). Residues 154 to 177 (LPPPDSRGPEVFPLPPSLPVPAPS) show a composition bias toward pro residues. Phosphoserine is present on residues serine 187, serine 220, and serine 223. Arginine 263 carries the asymmetric dimethylarginine; alternate modification. Arginine 263 carries the omega-N-methylarginine; alternate modification. Disordered regions lie at residues 310-365 (DTSS…TEQP) and 383-437 (PSSF…RAVG). Residues 313–324 (SEERWQKAEEQR) show a composition bias toward basic and acidic residues. 2 stretches are compositionally biased toward polar residues: residues 354–364 (AQQSRAVQTEQ) and 383–393 (PSSFVPTSKTI). The span at 415–427 (YEPRPDGSQDARK) shows a compositional bias: basic and acidic residues. Serine 431 is modified (phosphoserine). Arginine 450 is modified (omega-N-methylarginine).

The protein is Proline and serine-rich protein 2 (Proser2) of Mus musculus (Mouse).